The primary structure comprises 175 residues: Translation initiation factor IF-3 (175 aa).

Belongs to the IF-3 family. Monomer.

The protein resides in the cytoplasm. IF-3 binds to the 30S ribosomal subunit and shifts the equilibrium between 70S ribosomes and their 50S and 30S subunits in favor of the free subunits, thus enhancing the availability of 30S subunits on which protein synthesis initiation begins. The sequence is that of Translation initiation factor IF-3 from Staphylococcus aureus (strain MRSA252).